An 89-amino-acid polypeptide reads, in one-letter code: Extender of the chronological lifespan protein ecl3 (89 aa).

This sequence belongs to the ecl1 family.

Its subcellular location is the nucleus. Involved in chronological cell aging. The protein is Extender of the chronological lifespan protein ecl3 (ecl3) of Schizosaccharomyces pombe (strain 972 / ATCC 24843) (Fission yeast).